The sequence spans 375 residues: MAWTGPIKGTFSGMVPRCLRRTPEQTRDVIDSERLLYHRFRALFREGASQSPLETCCRNHKRSSARADQTNIRVKKTMVAKTRNPRAIHPLNEKVYSVRKIFKQLPSNKPSRIVPVRENGCRWRKVVYHRAHFEELPMSFKLSPRAYPRFNCLVRKHGYGKTIRMVSCYASGISEAKNSLARTIREKFARSAYLSGKRQVPPPLKREDFGTWNDYREELKKNQTKWYLCRVHYRQAYDRLYDQEFRYWKGHCSFETTRPRVRCGDWQSPLDSLVALQSPPMDLVCNAPTLLPTAIPVPDHPSYRKYKLSDLSWTKQHERAVREDQKRLKRAVGEKDKIKDKYGVQHERLYRQNFMKNFRRIAEMGRSSAPRGPFL.

This is Non-structural protein NS5 (NS-5) from Rottboellia (Sorghum).